The sequence spans 189 residues: Segregation and condensation protein B (189 aa).

The protein belongs to the ScpB family. As to quaternary structure, homodimer. Homodimerization may be required to stabilize the binding of ScpA to the Smc head domains. Component of a cohesin-like complex composed of ScpA, ScpB and the Smc homodimer, in which ScpA and ScpB bind to the head domain of Smc. The presence of the three proteins is required for the association of the complex with DNA.

The protein localises to the cytoplasm. In terms of biological role, participates in chromosomal partition during cell division. May act via the formation of a condensin-like complex containing Smc and ScpA that pull DNA away from mid-cell into both cell halves. This chain is Segregation and condensation protein B, found in Streptococcus pneumoniae serotype 19F (strain G54).